A 142-amino-acid polypeptide reads, in one-letter code: ATP synthase epsilon chain (142 aa).

The protein belongs to the ATPase epsilon chain family. F-type ATPases have 2 components, CF(1) - the catalytic core - and CF(0) - the membrane proton channel. CF(1) has five subunits: alpha(3), beta(3), gamma(1), delta(1), epsilon(1). CF(0) has three main subunits: a, b and c.

It localises to the cell inner membrane. Functionally, produces ATP from ADP in the presence of a proton gradient across the membrane. This Shewanella halifaxensis (strain HAW-EB4) protein is ATP synthase epsilon chain.